A 102-amino-acid chain; its full sequence is Large ribosomal subunit protein bL21 (102 aa).

Belongs to the bacterial ribosomal protein bL21 family. In terms of assembly, part of the 50S ribosomal subunit. Contacts protein L20.

Its function is as follows. This protein binds to 23S rRNA in the presence of protein L20. The protein is Large ribosomal subunit protein bL21 of Geobacillus sp. (strain WCH70).